A 61-amino-acid polypeptide reads, in one-letter code: MAKKSLIAKAKRTPKFGVRTYNRCPICGRPRAYLRKFGICRICFRSMALKGELPGVVKSSW.

Cys-24, Cys-27, Cys-40, and Cys-43 together coordinate Zn(2+).

Belongs to the universal ribosomal protein uS14 family. Zinc-binding uS14 subfamily. In terms of assembly, part of the 30S ribosomal subunit. Contacts proteins S3 and S10. Zn(2+) serves as cofactor.

Functionally, binds 16S rRNA, required for the assembly of 30S particles and may also be responsible for determining the conformation of the 16S rRNA at the A site. This is Small ribosomal subunit protein uS14 from Syntrophobacter fumaroxidans (strain DSM 10017 / MPOB).